Consider the following 503-residue polypeptide: Probable cytosol aminopeptidase (503 aa).

The Mn(2+) site is built by K270 and D275. K282 is a catalytic residue. Positions 293, 352, and 354 each coordinate Mn(2+). The active site involves R356.

The protein belongs to the peptidase M17 family. Mn(2+) serves as cofactor.

The protein resides in the cytoplasm. The catalysed reaction is Release of an N-terminal amino acid, Xaa-|-Yaa-, in which Xaa is preferably Leu, but may be other amino acids including Pro although not Arg or Lys, and Yaa may be Pro. Amino acid amides and methyl esters are also readily hydrolyzed, but rates on arylamides are exceedingly low.. It carries out the reaction Release of an N-terminal amino acid, preferentially leucine, but not glutamic or aspartic acids.. Its function is as follows. Presumably involved in the processing and regular turnover of intracellular proteins. Catalyzes the removal of unsubstituted N-terminal amino acids from various peptides. This is Probable cytosol aminopeptidase from Yersinia enterocolitica serotype O:8 / biotype 1B (strain NCTC 13174 / 8081).